A 308-amino-acid polypeptide reads, in one-letter code: ATP synthase gamma chain (308 aa).

The protein belongs to the ATPase gamma chain family. In terms of assembly, F-type ATPases have 2 components, CF(1) - the catalytic core - and CF(0) - the membrane proton channel. CF(1) has five subunits: alpha(3), beta(3), gamma(1), delta(1), epsilon(1). CF(0) has three main subunits: a, b and c.

The protein localises to the cell membrane. Its function is as follows. Produces ATP from ADP in the presence of a proton gradient across the membrane. The gamma chain is believed to be important in regulating ATPase activity and the flow of protons through the CF(0) complex. The polypeptide is ATP synthase gamma chain (Lacticaseibacillus paracasei (strain ATCC 334 / BCRC 17002 / CCUG 31169 / CIP 107868 / KCTC 3260 / NRRL B-441) (Lactobacillus paracasei)).